The following is a 210-amino-acid chain: Large ribosomal subunit protein uL3 (210 aa).

Residues 121–150 form a disordered region; it reads GGIKRHGFHRGPMAHGSKYHRRPGSLGAKG.

The protein belongs to the universal ribosomal protein uL3 family. Part of the 50S ribosomal subunit. Forms a cluster with proteins L14 and L19.

Functionally, one of the primary rRNA binding proteins, it binds directly near the 3'-end of the 23S rRNA, where it nucleates assembly of the 50S subunit. The sequence is that of Large ribosomal subunit protein uL3 from Pelotomaculum thermopropionicum (strain DSM 13744 / JCM 10971 / SI).